Consider the following 412-residue polypeptide: Heat stress transcription factor A-3 (412 aa).

The DNA-binding element occupies 53–147; the sequence is IPPFLSKTFD…LLKNIHRRRS (95 aa). Residues 144 to 170 are disordered; sequence RRRSPQSNQTCCSSTSQSQGSPTEVGG. Over residues 148-166 the composition is skewed to low complexity; it reads PQSNQTCCSSTSQSQGSPT. The hydrophobic repeat HR-A/B stretch occupies residues 159–225; that stretch reads SQSQGSPTEV…QLLSFLAKLF (67 aa). A coiled-coil region spans residues 166-224; it reads TEVGGEIEKLRKERRALMEEMVELQQQSRGTARHVDTVNQRLKAAEQRQKQLLSFLAKL. Positions 238–254 match the Bipartite nuclear localization signal motif; that stretch reads KGKEKGGALGLEKARKK. Residues 277–286 carry the AHA1 motif; the sequence is DDWERLLMYD. The AHA2 motif lies at 381-390; sequence DVCWEQFAAG.

This sequence belongs to the HSF family. Class A subfamily. As to quaternary structure, homotrimer. In terms of processing, exhibits temperature-dependent phosphorylation.

It localises to the nucleus. Transcriptional activator that specifically binds DNA sequence 5'-AGAAnnTTCT-3' known as heat shock promoter elements (HSE). Involved in heat stress response. Activated by DREB2A under heat stress. The polypeptide is Heat stress transcription factor A-3 (HSFA3) (Arabidopsis thaliana (Mouse-ear cress)).